Reading from the N-terminus, the 158-residue chain is NAD(P)H-quinone oxidoreductase subunit N (158 aa).

Belongs to the complex I NdhN subunit family. As to quaternary structure, NDH-1 can be composed of about 15 different subunits; different subcomplexes with different compositions have been identified which probably have different functions.

The protein localises to the cellular thylakoid membrane. It catalyses the reaction a plastoquinone + NADH + (n+1) H(+)(in) = a plastoquinol + NAD(+) + n H(+)(out). It carries out the reaction a plastoquinone + NADPH + (n+1) H(+)(in) = a plastoquinol + NADP(+) + n H(+)(out). In terms of biological role, NDH-1 shuttles electrons from an unknown electron donor, via FMN and iron-sulfur (Fe-S) centers, to quinones in the respiratory and/or the photosynthetic chain. The immediate electron acceptor for the enzyme in this species is believed to be plastoquinone. Couples the redox reaction to proton translocation, and thus conserves the redox energy in a proton gradient. Cyanobacterial NDH-1 also plays a role in inorganic carbon-concentration. The protein is NAD(P)H-quinone oxidoreductase subunit N of Prochlorococcus marinus (strain AS9601).